The primary structure comprises 105 residues: MSDSEYLTRAEAALAAIERALDDTDADIELERSGNVLTLEFENRSKIIVNLQPPMSEIWIAAKAGGFHFRFVDGEWRDTRSGTEFFAALSEYATQQAGEPVHFEA.

Belongs to the frataxin family.

Involved in iron-sulfur (Fe-S) cluster assembly. May act as a regulator of Fe-S biogenesis. The chain is Iron-sulfur cluster assembly protein CyaY from Paraburkholderia xenovorans (strain LB400).